Here is a 291-residue protein sequence, read N- to C-terminus: B3 domain-containing protein At2g16210 (291 aa).

The TF-B3 1 DNA-binding region spans 19 to 114 (FFKVVQSINV…HFTVNIFKLD (96 aa)). The span at 149–159 (VSSNRGQTTAA) shows a compositional bias: polar residues. The interval 149–182 (VSSNRGQTTAAESKGRKLNLGKRAAKESQSSKRT) is disordered. Over residues 172 to 182 (AAKESQSSKRT) the composition is skewed to basic and acidic residues. A DNA-binding region (TF-B3 2) is located at residues 200 to 291 (AAAFTILFKQ…KELLLVVSKP (92 aa)).

The protein localises to the nucleus. The protein is B3 domain-containing protein At2g16210 of Arabidopsis thaliana (Mouse-ear cress).